A 245-amino-acid chain; its full sequence is Phosphoribosyl isomerase A (245 aa).

Asp11 acts as the Proton acceptor in catalysis. Asp130 acts as the Proton donor in catalysis.

Belongs to the HisA/HisF family.

The protein resides in the cytoplasm. It carries out the reaction 1-(5-phospho-beta-D-ribosyl)-5-[(5-phospho-beta-D-ribosylamino)methylideneamino]imidazole-4-carboxamide = 5-[(5-phospho-1-deoxy-D-ribulos-1-ylimino)methylamino]-1-(5-phospho-beta-D-ribosyl)imidazole-4-carboxamide. The catalysed reaction is N-(5-phospho-beta-D-ribosyl)anthranilate = 1-(2-carboxyphenylamino)-1-deoxy-D-ribulose 5-phosphate. The protein operates within amino-acid biosynthesis; L-histidine biosynthesis; L-histidine from 5-phospho-alpha-D-ribose 1-diphosphate: step 4/9. It functions in the pathway amino-acid biosynthesis; L-tryptophan biosynthesis; L-tryptophan from chorismate: step 3/5. Its function is as follows. Involved in both the histidine and tryptophan biosynthetic pathways. The protein is Phosphoribosyl isomerase A (priA) of Mycobacterium bovis (strain ATCC BAA-935 / AF2122/97).